The following is a 301-amino-acid chain: Protoheme IX farnesyltransferase (301 aa).

The next 9 membrane-spanning stretches (helical) occupy residues 20–42 (FTELVKIGIVNSNTITAFTGMWL), 55–75 (VDVIFFTIVGSALIVAASGAF), 105–125 (ALMVALVLGVVGTIMLFMTTW), 126–146 (QAGVLGVIGVFLYVVVYSLYA), 150–172 (LVSNTVIGSFSGAVPPLIGWFAV), 176–198 (FSIVPIMLFLVMFCWQPPHFYAI), 227–247 (MFFWVILLTILPFFMFDLGIV), 249–269 (VILATLLNIGWLALSIYGFKM), and 280–300 (FVYSLNYMTILFVAMVVISIF).

This sequence belongs to the UbiA prenyltransferase family. Protoheme IX farnesyltransferase subfamily. As to quaternary structure, interacts with CtaA.

It is found in the cell membrane. It catalyses the reaction heme b + (2E,6E)-farnesyl diphosphate + H2O = Fe(II)-heme o + diphosphate. Its pathway is porphyrin-containing compound metabolism; heme O biosynthesis; heme O from protoheme: step 1/1. Converts heme B (protoheme IX) to heme O by substitution of the vinyl group on carbon 2 of heme B porphyrin ring with a hydroxyethyl farnesyl side group. In Listeria monocytogenes serovar 1/2a (strain ATCC BAA-679 / EGD-e), this protein is Protoheme IX farnesyltransferase.